Consider the following 475-residue polypeptide: Sulfate adenylyltransferase subunit 1 (475 aa).

Residues 24-240 (KSLLRFLTCG…ESAEVERELE (217 aa)) form the tr-type G domain. The tract at residues 33 to 40 (GSVDDGKS) is G1. 33–40 (GSVDDGKS) contacts GTP. Positions 91 to 95 (GITID) are G2. Residues 112-115 (DTPG) form a G3 region. Residues 112-116 (DTPGH) and 167-170 (NKMD) each bind GTP. A G4 region spans residues 167–170 (NKMD). The interval 204–206 (SAL) is G5.

This sequence belongs to the TRAFAC class translation factor GTPase superfamily. Classic translation factor GTPase family. CysN/NodQ subfamily. As to quaternary structure, heterodimer composed of CysD, the smaller subunit, and CysN.

It catalyses the reaction sulfate + ATP + H(+) = adenosine 5'-phosphosulfate + diphosphate. It participates in sulfur metabolism; hydrogen sulfide biosynthesis; sulfite from sulfate: step 1/3. Its function is as follows. With CysD forms the ATP sulfurylase (ATPS) that catalyzes the adenylation of sulfate producing adenosine 5'-phosphosulfate (APS) and diphosphate, the first enzymatic step in sulfur assimilation pathway. APS synthesis involves the formation of a high-energy phosphoric-sulfuric acid anhydride bond driven by GTP hydrolysis by CysN coupled to ATP hydrolysis by CysD. This chain is Sulfate adenylyltransferase subunit 1, found in Aeromonas hydrophila subsp. hydrophila (strain ATCC 7966 / DSM 30187 / BCRC 13018 / CCUG 14551 / JCM 1027 / KCTC 2358 / NCIMB 9240 / NCTC 8049).